The sequence spans 221 residues: Oxaloacetate tautomerase FAHD1, mitochondrial (221 aa).

A mitochondrion-targeting transit peptide spans Met1–Tyr24. An oxalate-binding site is contributed by Arg22. Ser37 is modified (phosphoserine). Residues Glu68, Glu70, and Asp99 each coordinate Mg(2+). The residue at position 110 (Lys110) is an N6-acetyllysine. At Lys112 the chain carries N6-succinyllysine. Residues Lys120 and Thr189 each contribute to the oxalate site.

The protein belongs to the FAH family. In terms of assembly, homodimer. The cofactor is Mg(2+). Requires Mn(2+) as cofactor. As to expression, ubiquitous (at protein level).

It localises to the mitochondrion. Its subcellular location is the cytoplasm. The protein localises to the cytosol. The catalysed reaction is oxaloacetate = enol-oxaloacetate. It catalyses the reaction oxaloacetate + H(+) = pyruvate + CO2. The enzyme catalyses a 3-acylpyruvate + H2O = a carboxylate + pyruvate + H(+). It carries out the reaction acetylpyruvate + H2O = acetate + pyruvate + H(+). The catalysed reaction is 3-fumarylpyruvate + H2O = fumarate + pyruvate + H(+). Its activity is regulated as follows. Oxaloacetate decarboxylation is competitively inhibited by oxalate. Functionally, tautomerase that converts enol-oxaloacetate, a strong inhibitor of succinate dehydrogenase, to the physiological keto form of oxaloacetate. It is thereby required to maximize aerobic respiration efficiency by preventing succinate dehydrogenase inhibition. Also acts as a weak oxaloacetate decarboxylase (ODx), catalyzing the decarboxylation of oxaloacetate (OAA) to pyruvate and CO(2), and as such is likely a regulatory enzyme in the TCA cycle. Also displays acylpyruvase activity, being able to hydrolyze acetylpyruvate and fumarylpyruvate in vitro. Exhibits only a weak hydrolase activity on methylacetopyruvate and acetylacetone, and no activity toward acetoacetyl-CoA. This Homo sapiens (Human) protein is Oxaloacetate tautomerase FAHD1, mitochondrial.